An 87-amino-acid chain; its full sequence is UPF0213 protein SSA_0709 (87 aa).

Residues 3 to 78 (NKAYMYVLEC…KKKTRQAKLA (76 aa)) enclose the GIY-YIG domain.

The protein belongs to the UPF0213 family.

This chain is UPF0213 protein SSA_0709, found in Streptococcus sanguinis (strain SK36).